The primary structure comprises 469 residues: Aspartyl/glutamyl-tRNA(Asn/Gln) amidotransferase subunit B (469 aa).

This sequence belongs to the GatB/GatE family. GatB subfamily. Heterotrimer of A, B and C subunits.

It catalyses the reaction L-glutamyl-tRNA(Gln) + L-glutamine + ATP + H2O = L-glutaminyl-tRNA(Gln) + L-glutamate + ADP + phosphate + H(+). It carries out the reaction L-aspartyl-tRNA(Asn) + L-glutamine + ATP + H2O = L-asparaginyl-tRNA(Asn) + L-glutamate + ADP + phosphate + 2 H(+). Functionally, allows the formation of correctly charged Asn-tRNA(Asn) or Gln-tRNA(Gln) through the transamidation of misacylated Asp-tRNA(Asn) or Glu-tRNA(Gln) in organisms which lack either or both of asparaginyl-tRNA or glutaminyl-tRNA synthetases. The reaction takes place in the presence of glutamine and ATP through an activated phospho-Asp-tRNA(Asn) or phospho-Glu-tRNA(Gln). This is Aspartyl/glutamyl-tRNA(Asn/Gln) amidotransferase subunit B from Methanococcus maripaludis (strain C6 / ATCC BAA-1332).